The primary structure comprises 464 residues: tRNA(Ile)-lysidine synthase (464 aa).

Position 26-31 (26-31) interacts with ATP; that stretch reads SGGPDS.

It belongs to the tRNA(Ile)-lysidine synthase family.

The protein resides in the cytoplasm. It carries out the reaction cytidine(34) in tRNA(Ile2) + L-lysine + ATP = lysidine(34) in tRNA(Ile2) + AMP + diphosphate + H(+). Functionally, ligates lysine onto the cytidine present at position 34 of the AUA codon-specific tRNA(Ile) that contains the anticodon CAU, in an ATP-dependent manner. Cytidine is converted to lysidine, thus changing the amino acid specificity of the tRNA from methionine to isoleucine. This chain is tRNA(Ile)-lysidine synthase, found in Geobacillus kaustophilus (strain HTA426).